Here is a 375-residue protein sequence, read N- to C-terminus: Erythronate-4-phosphate dehydrogenase (375 aa).

Substrate is bound by residues Ser-45 and Thr-66. NAD(+) is bound by residues Asp-146 and Thr-175. Arg-208 is an active-site residue. An NAD(+)-binding site is contributed by Asp-232. The active site involves Glu-237. Catalysis depends on His-254, which acts as the Proton donor. An NAD(+)-binding site is contributed by Gly-257. Tyr-258 contributes to the substrate binding site.

It belongs to the D-isomer specific 2-hydroxyacid dehydrogenase family. PdxB subfamily. In terms of assembly, homodimer.

It localises to the cytoplasm. The catalysed reaction is 4-phospho-D-erythronate + NAD(+) = (R)-3-hydroxy-2-oxo-4-phosphooxybutanoate + NADH + H(+). It functions in the pathway cofactor biosynthesis; pyridoxine 5'-phosphate biosynthesis; pyridoxine 5'-phosphate from D-erythrose 4-phosphate: step 2/5. Functionally, catalyzes the oxidation of erythronate-4-phosphate to 3-hydroxy-2-oxo-4-phosphonooxybutanoate. The protein is Erythronate-4-phosphate dehydrogenase of Edwardsiella ictaluri (strain 93-146).